The following is a 566-amino-acid chain: Alpha-keto-acid decarboxylase (566 aa).

A thiamine diphosphate-binding site is contributed by E61. The segment at 396 to 478 is thiamine pyrophosphate binding; the sequence is TSFYGMADHR…VVVNNDGYTV (83 aa). Mg(2+)-binding residues include D446, N473, and G475.

The protein belongs to the TPP enzyme family. A metal cation serves as cofactor. The cofactor is thiamine diphosphate.

In terms of biological role, decarboxylates branched-chain and aromatic alpha-keto acids to aldehydes. This is Alpha-keto-acid decarboxylase (kdc) from Mycobacterium ulcerans (strain Agy99).